A 436-amino-acid polypeptide reads, in one-letter code: tRNA(Ile)-lysidine synthase (436 aa).

21–26 (SGGVDS) lines the ATP pocket.

The protein belongs to the tRNA(Ile)-lysidine synthase family.

It is found in the cytoplasm. It catalyses the reaction cytidine(34) in tRNA(Ile2) + L-lysine + ATP = lysidine(34) in tRNA(Ile2) + AMP + diphosphate + H(+). Its function is as follows. Ligates lysine onto the cytidine present at position 34 of the AUA codon-specific tRNA(Ile) that contains the anticodon CAU, in an ATP-dependent manner. Cytidine is converted to lysidine, thus changing the amino acid specificity of the tRNA from methionine to isoleucine. The chain is tRNA(Ile)-lysidine synthase from Aster yellows witches'-broom phytoplasma (strain AYWB).